Consider the following 226-residue polypeptide: Protein GrpE (226 aa).

Disordered stretches follow at residues 1 to 31 (MTPN…PDTL) and 189 to 226 (VSKG…PAEA). The segment covering 192–218 (GGPKAAEASKPAGEAPKPAGEAPKPAG) has biased composition (low complexity).

This sequence belongs to the GrpE family. Homodimer.

It localises to the cytoplasm. In terms of biological role, participates actively in the response to hyperosmotic and heat shock by preventing the aggregation of stress-denatured proteins, in association with DnaK and GrpE. It is the nucleotide exchange factor for DnaK and may function as a thermosensor. Unfolded proteins bind initially to DnaJ; upon interaction with the DnaJ-bound protein, DnaK hydrolyzes its bound ATP, resulting in the formation of a stable complex. GrpE releases ADP from DnaK; ATP binding to DnaK triggers the release of the substrate protein, thus completing the reaction cycle. Several rounds of ATP-dependent interactions between DnaJ, DnaK and GrpE are required for fully efficient folding. The protein is Protein GrpE of Methylobacterium nodulans (strain LMG 21967 / CNCM I-2342 / ORS 2060).